Here is a 355-residue protein sequence, read N- to C-terminus: Peptide chain release factor 1 (355 aa).

Position 231 is an N5-methylglutamine (glutamine 231). Residues 283–303 (NAQNKEARKTQVGSGDRSERI) are disordered.

The protein belongs to the prokaryotic/mitochondrial release factor family. In terms of processing, methylated by PrmC. Methylation increases the termination efficiency of RF1.

Its subcellular location is the cytoplasm. Functionally, peptide chain release factor 1 directs the termination of translation in response to the peptide chain termination codons UAG and UAA. The sequence is that of Peptide chain release factor 1 from Helicobacter hepaticus (strain ATCC 51449 / 3B1).